Consider the following 279-residue polypeptide: Ribosomal RNA small subunit methyltransferase A (279 aa).

S-adenosyl-L-methionine contacts are provided by His11, Leu13, Gly42, Glu63, Asp88, and Asn104.

It belongs to the class I-like SAM-binding methyltransferase superfamily. rRNA adenine N(6)-methyltransferase family. RsmA subfamily.

The protein resides in the cytoplasm. It carries out the reaction adenosine(1518)/adenosine(1519) in 16S rRNA + 4 S-adenosyl-L-methionine = N(6)-dimethyladenosine(1518)/N(6)-dimethyladenosine(1519) in 16S rRNA + 4 S-adenosyl-L-homocysteine + 4 H(+). Functionally, specifically dimethylates two adjacent adenosines (A1518 and A1519) in the loop of a conserved hairpin near the 3'-end of 16S rRNA in the 30S particle. May play a critical role in biogenesis of 30S subunits. This is Ribosomal RNA small subunit methyltransferase A from Synechococcus sp. (strain JA-3-3Ab) (Cyanobacteria bacterium Yellowstone A-Prime).